The primary structure comprises 318 residues: CRISPR-associated protein Cas7/Csa2 1 (318 aa).

This sequence belongs to the CRISPR-associated protein Cas7/Cst2/DevR family. Subtype I-a/Apern subfamily. As to quaternary structure, part of the aCascade ribonucleoprotein complex, minimally composed of Csa2 and Cas5a, which binds crRNA. Other possible components of aCascade in strain P1 are Cas6b (SSO1437) and Csa5 (SSO1443), while SSO1399, Cas5b (SSO1400) and SSO1401 have sometimes been seen weakly associated. Csa2 is probably the major RNA-binding subunit. The Csa2-Cas5a-crRNA complex also binds target DNA homologous to crRNA, probably forming an R-loop. Purified aCascade forms a filament about 6 nm in width.

Functionally, CRISPR (clustered regularly interspaced short palindromic repeat) is an adaptive immune system that provides protection against mobile genetic elements (viruses, transposable elements and conjugative plasmids). CRISPR clusters contain spacers, sequences complementary to antecedent mobile elements, and target invading nucleic acids. CRISPR clusters are transcribed and processed into CRISPR RNA (crRNA). The chain is CRISPR-associated protein Cas7/Csa2 1 (cas7a) from Saccharolobus solfataricus (strain ATCC 35092 / DSM 1617 / JCM 11322 / P2) (Sulfolobus solfataricus).